Consider the following 306-residue polypeptide: Protein SEC13 homolog (306 aa).

WD repeat units follow at residues 11-50 (QHRDAIHDAQLNIYGNRLATCGSDRLVKIFEVRPNGQSYP), 56-97 (GHNG…WQKT), 102-143 (THEA…QQWQ), 150-195 (CHDQ…NEWT), 202-245 (CHKD…TAEW), and 252-291 (QAPCALYHASFSPCGSFLSVSGDDNMITLWRENLQGQWIK).

The protein belongs to the WD repeat SEC13 family. As to quaternary structure, probably part of the GATOR complex.

It is found in the cytoplasmic vesicle. The protein localises to the COPII-coated vesicle membrane. The protein resides in the endoplasmic reticulum membrane. It localises to the nucleus. Its subcellular location is the nuclear pore complex. It is found in the lysosome membrane. Functions as a component of the nuclear pore complex (NPC) and the COPII coat. In terms of biological role, as a component of the GATOR complex may function in the amino acid-sensing branch of the TORC1 signaling pathway. This chain is Protein SEC13 homolog, found in Caenorhabditis briggsae.